An 846-amino-acid chain; its full sequence is Neurotactin (846 aa).

Positions 1–222 are disordered; sequence MGELEEKETP…EDASDAPPKR (222 aa). Residues 1 to 324 lie on the Cytoplasmic side of the membrane; the sequence is MGELEEKETP…LRGYKCSVDD (324 aa). Low complexity predominate over residues 11-20; it reads PTETTAAQQE. Residues 23–42 are compositionally biased toward basic and acidic residues; sequence EEPKETDKMLDKKEDAKEKT. Threonine 28 is subject to Phosphothreonine; by PKC. Threonine 42 carries the phosphothreonine modification. A Phosphoserine modification is found at serine 44. Threonine 47 is modified (phosphothreonine). 2 positions are modified to phosphoserine: serine 48 and serine 52. The span at 63-74 shows a compositional bias: basic and acidic residues; the sequence is AEKKIDDAELAK. Residue serine 75 is modified to Phosphoserine; by PKC. Serine 77 is subject to Phosphoserine. 4 stretches are compositionally biased toward basic and acidic residues: residues 95 to 111, 141 to 155, 163 to 178, and 185 to 205; these read DSAD…EVKP, LLEK…KEAN, GKDE…ERLR, and PSAE…KSEA. Serine 103 carries the post-translational modification Phosphoserine; by PKC. Serine 169 is subject to Phosphoserine; by PKC. Phosphoserine occurs at positions 186 and 203. Residue threonine 206 is modified to Phosphothreonine. Phosphoserine is present on serine 256. A Phosphothreonine modification is found at threonine 259. At serine 263 the chain carries Phosphoserine. Threonine 269 carries the post-translational modification Phosphothreonine. Residues 325–346 traverse the membrane as a helical; Signal-anchor for type II membrane protein segment; sequence ALIVFGILLFVLLLGVIGYVLT. At 347-846 the chain is on the extracellular side; the sequence is HETLTSPPLR…DIVPRYARVD (500 aa). Asparagine 410, asparagine 417, and asparagine 428 each carry an N-linked (GlcNAc...) asparagine glycan. 2 disulfide bridges follow: cysteine 422–cysteine 437 and cysteine 600–cysteine 605. N-linked (GlcNAc...) asparagine glycosylation is found at asparagine 636, asparagine 691, and asparagine 720. An intrachain disulfide couples cysteine 738 to cysteine 830.

It in the C-terminal section; belongs to the type-B carboxylesterase/lipase family. Late in embryogenesis, expression is restricted to cells of the peripheral and central nervous system undergoing proliferation and differentiation. Also expressed in larval CNS, mesoderm and imaginal disks.

The protein localises to the membrane. Functionally, may mediate or modulate cell adhesion between embryonic cells during development. This Drosophila melanogaster (Fruit fly) protein is Neurotactin (Nrt).